The following is a 432-amino-acid chain: C4-dicarboxylate transport protein (432 aa).

8 consecutive transmembrane segments (helical) span residues 8-28, 44-64, 78-98, 148-168, 188-208, 222-242, 307-327, and 355-375; these read ILYV…HYWP, LIKM…IAGM, LLYF…AAHL, GDIL…AVLG, IVHV…AFTI, LIGT…GTIA, IYMT…LTLM, and AATL…ILGI.

It belongs to the dicarboxylate/amino acid:cation symporter (DAACS) (TC 2.A.23) family.

The protein localises to the cell inner membrane. Its function is as follows. Responsible for the transport of dicarboxylates such as succinate, fumarate, and malate from the periplasm across the membrane. This Cupriavidus necator (strain ATCC 17699 / DSM 428 / KCTC 22496 / NCIMB 10442 / H16 / Stanier 337) (Ralstonia eutropha) protein is C4-dicarboxylate transport protein.